Reading from the N-terminus, the 559-residue chain is Small ribosomal subunit protein bS1 (559 aa).

S1 motif domains are found at residues 21–87, 105–171, 192–260, 277–347, 364–434, and 451–520; these read GAII…LSRE, DEVV…VSRR, GQQV…LGLK, GTRV…LGIK, GDRI…LGIK, and GSIV…LSVK.

Belongs to the bacterial ribosomal protein bS1 family.

In terms of biological role, binds mRNA; thus facilitating recognition of the initiation point. It is needed to translate mRNA with a short Shine-Dalgarno (SD) purine-rich sequence. This chain is Small ribosomal subunit protein bS1 (rpsA), found in Pseudomonas aeruginosa (strain ATCC 15692 / DSM 22644 / CIP 104116 / JCM 14847 / LMG 12228 / 1C / PRS 101 / PAO1).